We begin with the raw amino-acid sequence, 176 residues long: Non-specific lipid transfer protein GPI-anchored 12 (176 aa).

Positions 1–20 are cleaved as a signal peptide; it reads MLTTNTLAVLLLLFLSLCSG. 4 disulfide bridges follow: cysteine 40–cysteine 83, cysteine 50–cysteine 67, cysteine 68–cysteine 110, and cysteine 81–cysteine 120. N-linked (GlcNAc...) asparagine glycosylation occurs at asparagine 46. A lipid anchor (GPI-anchor amidated asparagine) is attached at asparagine 149. Residues 150 to 176 constitute a propeptide, removed in mature form; it reads GAMTTKYCGVALNSLALLLLFTFLSLS.

The protein belongs to the plant LTP family. As to expression, preferentially expressed in the endodermis of hypocotyls and roots of seedlings, and in petals and anthers of inflorescences. May also be expressed in siliques, carpels and pedicels.

The protein resides in the cell membrane. Probable lipid transfer protein. The protein is Non-specific lipid transfer protein GPI-anchored 12 of Arabidopsis thaliana (Mouse-ear cress).